A 292-amino-acid polypeptide reads, in one-letter code: L-serine dehydratase, alpha chain (292 aa).

This sequence belongs to the iron-sulfur dependent L-serine dehydratase family. As to quaternary structure, heterooctamer of four alpha chains and four beta chains. [4Fe-4S] cluster is required as a cofactor.

It carries out the reaction L-serine = pyruvate + NH4(+). Its pathway is carbohydrate biosynthesis; gluconeogenesis. The chain is L-serine dehydratase, alpha chain (sdhA) from Peptoniphilus asaccharolyticus (Peptostreptococcus asaccharolyticus).